Reading from the N-terminus, the 2055-residue chain is MLKFKYGVRNPPEASASEPIASRASRLNLFFQGKPPLMTQQQMSALSREGMLDALFALFEECSQPALMKMKHVSSFVQKYSDTIAELRELQPSARDFEVRSLVGCGHFAEVQVVREKATGDVYAMKIMKKKALLAQEQVSFFEEERNILSRSTSPWIPQLQYAFQDKNNLYLVMEYQPGGDFLSLLNRYEDQLDESMIQFYLAELILAVHSVHQMGYVHRDIKPENILIDRTGEIKLVDFGSAAKMNSNKVDAKLPIGTPDYMAPEVLTVMNEDRRGTYGLDCDWWSVGVVAYEMVYGKTPFTEGTSARTFNNIMNFQRFLKFPDDPKVSSELLDLLQSLLCVQKERLKFEGLCCHPFFARTDWNNIRNSPPPFVPTLKSDDDTSNFDEPEKNSWVSSSVCQLSPSGFSGEELPFVGFSYSKALGYLGRSESVVSSLDSPAKVSSMEKKLLIKSKELQDSQDKCHKMEQEMTRLHRRVSEVEAVLSQKEVELKASETQRSLLEQDLATYITECSSLKRSLEQARMEVSQEDDKALQLLHDIREQSRKLQEIKEQEYQAQVEEMRLMMNQLEEDLVSARRRSDLYESELRESRLAAEEFKRKANECQHKLMKAKDQGKPEVGEYSKLEKINAEQQLKIQELQEKLEKAVKASTEATELLQNIRQAKERAERELEKLHNREDSSEGIKKKLVEAEERRHSLENKVKRLETMERRENRLKDDIQTKSEQIQQMADKILELEEKHREAQVSAQHLEVHLKQKEQHYEEKIKVLDNQIKKDLADKESLENMMQRHEEEAHEKGKILSEQKAMINAMDSKIRSLEQRIVELSEANKLAANSSLFTQRNMKAQEEMISELRQQKFYLETQAGKLEAQNRKLEEQLEKISHQDHSDKSRLLELETRLREVSLEHEEQKLELKRQLTELQLSLQERESQLTALQAARAALESQLRQAKTELEETTAEAEEEIQALTAHRDEIQRKFDALRNSCTVITDLEEQLNQLTEDNAELNNQNFYLSKQLDEASGANDEIVQLRSEVDHLRREITEREMQLTSQKQTMEALKTTCTMLEEQVLDLEALNDELLEKERQWEAWRSVLGDEKSQFECRVRELQRMLDTEKQSRARADQRITESRQVVELAVKEHKAEILALQQALKEQKLKAESLSDKLNDLEKKHAMLEMNARSLQQKLETERELKQRLLEEQAKLQQQMDLQKNHIFRLTQGLQEALDRADLLKTERSDLEYQLENIQVLYSHEKVKMEGTISQQTKLIDFLQAKMDQPAKKKKVPLQYNELKLALEKEKARCAELEEALQKTRIELRSAREEAAHRKATDHPHPSTPATARQQIAMSAIVRSPEHQPSAMSLLAPPSSRRKESSTPEEFSRRLKERMHHNIPHRFNVGLNMRATKCAVCLDTVHFGRQASKCLECQVMCHPKCSTCLPATCGLPAEYATHFTEAFCRDKMNSPGLQSKEPGSSLHLEGWMKVPRNNKRGQQGWDRKYIVLEGSKVLIYDNEAREAGQRPVEEFELCLPDGDVSIHGAVGASELANTAKADVPYILKMESHPHTTCWPGRTLYLLAPSFPDKQRWVTALESVVAGGRVSREKAEADAKLLGNSLLKLEGDDRLDMNCTLPFSDQVVLVGTEEGLYALNVLKNSLTHIPGIGAVFQIYIIKDLEKLLMIAGEERALCLVDVKKVKQSLAQSHLPAQPDVSPNIFEAVKGCHLFAAGKIENSLCICAAMPSKVVILRYNDNLSKYCIRKEIETSEPCSCIHFTNYSILIGTNKFYEIDMKQYTLDEFLDKNDHSLAPAVFASSSNSFPVSIVQANSAGQREEYLLCFHEFGVFVDSYGRRSRTDDLKWSRLPLAFAYREPYLFVTHFNSLEVIEIQARSSLGSPARAYLEIPNPRYLGPAISSGAIYLASSYQDKLRVICCKGNLVKESGTEQHRVPSTSRSSPNKRGPPTYNEHITKRVASSPAPPEGPSHPREPSTPHRYRDREGRTELRRDKSPGRPLEREKSPGRMLSTRRERSPGRLFEDSSRGRLPAGAVRTPLSQVNKVWDQSSV.

An N-acetylmethionine modification is found at M1. Residues F97 to F359 enclose the Protein kinase domain. ATP is bound by residues V103–V111 and K126. D221 (proton acceptor) is an active-site residue. An AGC-kinase C-terminal domain is found at A360 to S430. Phosphoserine occurs at positions 432, 439, 479, and 581. Coiled-coil stretches lie at residues A441–A1086, L1091–S1247, and A1275–T1325. An interaction with Rho/Rac region spans residues L1132–P1328. A Phosphotyrosine modification is found at Y1237. Positions R1316–H1329 are enriched in basic and acidic residues. Disordered stretches follow at residues R1316–A1336 and S1348–R1377. Residues P1353–S1363 show a composition bias toward low complexity. The segment covering R1365–R1377 has biased composition (basic and acidic residues). Residues P1388–C1437 form a Phorbol-ester/DAG-type zinc finger. Residues S1469 to A1589 form the PH domain. Positions R1617–G1907 constitute a CNH domain. K1747 bears the N6-acetyllysine mark. Residues S1932 to R2040 form a disordered region. Over residues V1939–N1948 the composition is skewed to polar residues. S1966 bears the Phosphoserine mark. Residues S1974–R2031 are compositionally biased toward basic and acidic residues. The SH3-binding motif lies at P1979–R1984. Position 2021 is a phosphoserine (S2021). T2041 bears the Phosphothreonine mark.

It belongs to the protein kinase superfamily. AGC Ser/Thr protein kinase family. In terms of assembly, interacts with TTC3. Homodimer. Directly interacts with KIF14 depending on the activation state (stronger interaction with the kinase-dead form). As to expression, a major signal was observed in testis and brain, but it was also detected in thymus, spleen, kidney, heart and lung.

It localises to the cytoplasm. It carries out the reaction L-seryl-[protein] + ATP = O-phospho-L-seryl-[protein] + ADP + H(+). It catalyses the reaction L-threonyl-[protein] + ATP = O-phospho-L-threonyl-[protein] + ADP + H(+). In terms of biological role, plays a role in cytokinesis. Required for KIF14 localization to the central spindle and midbody. Probable RHO/RAC effector that binds to the GTP-bound forms of RHO and RAC1. It probably binds p21 with a tighter specificity in vivo. Displays serine/threonine protein kinase activity. Plays an important role in the regulation of cytokinesis and the development of the central nervous system. Phosphorylates MYL9/MLC2. The sequence is that of Citron Rho-interacting kinase (Cit) from Mus musculus (Mouse).